Here is a 404-residue protein sequence, read N- to C-terminus: Glucose-1-phosphate adenylyltransferase (404 aa).

Residues Tyr-99, Gly-164, 179 to 180 (EK), and Ser-197 contribute to the alpha-D-glucose 1-phosphate site.

This sequence belongs to the bacterial/plant glucose-1-phosphate adenylyltransferase family.

The enzyme catalyses alpha-D-glucose 1-phosphate + ATP + H(+) = ADP-alpha-D-glucose + diphosphate. It participates in glycan biosynthesis; glycogen biosynthesis. Functionally, involved in the biosynthesis of ADP-glucose building block, required in the biosynthesis of maltose-1-phosphate (M1P) and in the elongation reactions to produce linear alpha-1,4-glucans. Catalyzes the reaction between ATP and alpha-D-glucose 1-phosphate (G1P) to produce pyrophosphate and ADP-Glc. The protein is Glucose-1-phosphate adenylyltransferase of Mycolicibacterium smegmatis (strain ATCC 700084 / mc(2)155) (Mycobacterium smegmatis).